Reading from the N-terminus, the 252-residue chain is Enolase-phosphatase E1 (252 aa).

Residues aspartate 14 and glutamate 16 each contribute to the Mg(2+) site. Substrate contacts are provided by residues serine 142–serine 143 and lysine 176. A Mg(2+)-binding site is contributed by aspartate 201.

This sequence belongs to the HAD-like hydrolase superfamily. MasA/MtnC family. As to quaternary structure, monomer. It depends on Mg(2+) as a cofactor.

Its subcellular location is the cytoplasm. It localises to the nucleus. The enzyme catalyses 5-methylsulfanyl-2,3-dioxopentyl phosphate + H2O = 1,2-dihydroxy-5-(methylsulfanyl)pent-1-en-3-one + phosphate. It functions in the pathway amino-acid biosynthesis; L-methionine biosynthesis via salvage pathway; L-methionine from S-methyl-5-thio-alpha-D-ribose 1-phosphate: step 3/6. The protein operates within amino-acid biosynthesis; L-methionine biosynthesis via salvage pathway; L-methionine from S-methyl-5-thio-alpha-D-ribose 1-phosphate: step 4/6. In terms of biological role, bifunctional enzyme that catalyzes the enolization of 2,3-diketo-5-methylthiopentyl-1-phosphate (DK-MTP-1-P) into the intermediate 2-hydroxy-3-keto-5-methylthiopentenyl-1-phosphate (HK-MTPenyl-1-P), which is then dephosphorylated to form the acireductone 1,2-dihydroxy-3-keto-5-methylthiopentene (DHK-MTPene). The chain is Enolase-phosphatase E1 from Drosophila ananassae (Fruit fly).